The following is a 418-amino-acid chain: Actin-related protein 3 (418 aa).

A2 bears the N-acetylalanine mark. 4 positions are modified to N6-acetyllysine: K240, K244, K251, and K254.

It belongs to the actin family. ARP3 subfamily. In terms of assembly, component of the Arp2/3 complex composed of ACTR2/ARP2, ACTR3/ARP3, ARPC1B/p41-ARC, ARPC2/p34-ARC, ARPC3/p21-ARC, ARPC4/p20-ARC and ARPC5/p16-ARC. Interacts with WHDC1. Interacts weakly with MEFV. Interacts with AVIL. As to quaternary structure, (Microbial infection) Interacts with bacterium B.thailandensis BimA.

The protein localises to the cytoplasm. It localises to the cytoskeleton. It is found in the cell projection. The protein resides in the nucleus. ATP-binding component of the Arp2/3 complex, a multiprotein complex that mediates actin polymerization upon stimulation by nucleation-promoting factor (NPF). The Arp2/3 complex mediates the formation of branched actin networks in the cytoplasm, providing the force for cell motility. Seems to contact the pointed end of the daughter actin filament. In podocytes, required for the formation of lamellipodia downstream of AVIL and PLCE1 regulation. In addition to its role in the cytoplasmic cytoskeleton, the Arp2/3 complex also promotes actin polymerization in the nucleus, thereby regulating gene transcription and repair of damaged DNA. The Arp2/3 complex promotes homologous recombination (HR) repair in response to DNA damage by promoting nuclear actin polymerization, leading to drive motility of double-strand breaks (DSBs). Plays a role in ciliogenesis. This chain is Actin-related protein 3 (Actr3), found in Mus musculus (Mouse).